The sequence spans 258 residues: 5'-nucleotidase SurE (258 aa).

4 residues coordinate a divalent metal cation: D18, D19, S49, and N102.

It belongs to the SurE nucleotidase family. A divalent metal cation is required as a cofactor.

Its subcellular location is the cytoplasm. It catalyses the reaction a ribonucleoside 5'-phosphate + H2O = a ribonucleoside + phosphate. Its function is as follows. Nucleotidase that shows phosphatase activity on nucleoside 5'-monophosphates. The protein is 5'-nucleotidase SurE of Vibrio campbellii (strain ATCC BAA-1116).